The primary structure comprises 340 residues: DNA-directed RNA polymerase subunit alpha (340 aa).

The alpha N-terminal domain (alpha-NTD) stretch occupies residues 1 to 236; the sequence is MLSLSKNWNT…EQLQLFIAFE (236 aa). The alpha C-terminal domain (alpha-CTD) stretch occupies residues 251–340; it reads FSPYLLKRVD…LSKRYEDSYN (90 aa).

Belongs to the RNA polymerase alpha chain family. In terms of assembly, homodimer. The RNAP catalytic core consists of 2 alpha, 1 beta, 1 beta' and 1 omega subunit. When a sigma factor is associated with the core the holoenzyme is formed, which can initiate transcription.

It carries out the reaction RNA(n) + a ribonucleoside 5'-triphosphate = RNA(n+1) + diphosphate. Its function is as follows. DNA-dependent RNA polymerase catalyzes the transcription of DNA into RNA using the four ribonucleoside triphosphates as substrates. This is DNA-directed RNA polymerase subunit alpha from Rickettsia typhi (strain ATCC VR-144 / Wilmington).